The sequence spans 531 residues: tRNA-2-methylthio-N(6)-dimethylallyladenosine synthase (531 aa).

Residues 1–26 (MNEKQRLEQTGQIKTESHPADRKSAL) are disordered. A compositionally biased stretch (basic and acidic residues) spans 15-26 (TESHPADRKSAL). Residues 80 to 198 (RKFYIRTYGC…LPYILHEAYM (119 aa)) form the MTTase N-terminal domain. Cys89, Cys125, Cys159, Cys235, Cys239, and Cys242 together coordinate [4Fe-4S] cluster. The Radical SAM core domain maps to 221-451 (RKGKIKAWVN…NDLVQEIAAK (231 aa)). The region spanning 454 to 517 (KQYEGQVVEV…TWTLTGELVN (64 aa)) is the TRAM domain.

This sequence belongs to the methylthiotransferase family. MiaB subfamily. As to quaternary structure, monomer. [4Fe-4S] cluster is required as a cofactor.

Its subcellular location is the cytoplasm. It catalyses the reaction N(6)-dimethylallyladenosine(37) in tRNA + (sulfur carrier)-SH + AH2 + 2 S-adenosyl-L-methionine = 2-methylsulfanyl-N(6)-dimethylallyladenosine(37) in tRNA + (sulfur carrier)-H + 5'-deoxyadenosine + L-methionine + A + S-adenosyl-L-homocysteine + 2 H(+). In terms of biological role, catalyzes the methylthiolation of N6-(dimethylallyl)adenosine (i(6)A), leading to the formation of 2-methylthio-N6-(dimethylallyl)adenosine (ms(2)i(6)A) at position 37 in tRNAs that read codons beginning with uridine. The chain is tRNA-2-methylthio-N(6)-dimethylallyladenosine synthase from Geobacillus kaustophilus (strain HTA426).